The following is an 805-amino-acid chain: Transducer protein BasT (805 aa).

The next 2 membrane-spanning stretches (helical) occupy residues Phe25–Leu45 and Asn296–Gly316. HAMP domains follow at residues Arg317 to Ser370 and Glu437 to Ala490. The Methyl-accepting transducer domain maps to Ser509 to Thr745. Residues Ile513–Asp532 are disordered. A compositionally biased stretch (polar residues) spans Ala516–Asp526. A glutamate methyl ester (Glu) mark is found at Glu554, Glu736, and Glu763. The segment at Ala752–Leu779 is disordered. Residues Glu754–Ala773 are compositionally biased toward low complexity.

The protein belongs to the methyl-accepting chemotaxis (MCP) protein family. In terms of assembly, interacts with CheA, CheY, CheW1 and CheW2. Post-translationally, methylated by CheR.

It is found in the cell membrane. Mediates chemotaxis towards five attractant amino acids (leucine, isoleucine, valine, methionine and cysteine). Probably transduces the signal from the substrate-binding protein BasB to the histidine kinase CheA. The protein is Transducer protein BasT (basT) of Halobacterium salinarum (strain ATCC 29341 / DSM 671 / R1).